Consider the following 637-residue polypeptide: Sterol 3-beta-glucosyltransferase UGT80A2 (637 aa).

Disordered stretches follow at residues 1–29 (MPEISPAELAKVSSSSSSSSSSSSGRASV) and 66–112 (VAES…TERQ). Over residues 13-24 (SSSSSSSSSSSS) the composition is skewed to low complexity. Residues 67 to 79 (AESSGTGNKSFSR) are compositionally biased toward polar residues. Basic and acidic residues predominate over residues 103-112 (RLDKSKTERQ).

The protein belongs to the glycosyltransferase 28 family. In terms of tissue distribution, expressed in roots, cauline leaf epidermal cells, stomata, stamen, pollen and around the base of siliques.

It catalyses the reaction a sterol + UDP-alpha-D-glucose = a sterol 3-beta-D-glucoside + UDP + H(+). In terms of biological role, involved in the biosynthesis of sterol glucosides. Catalyzes the synthesis of steryl glycosides (SGs) and acyl steryl glycosides (ASGs) which are the most abundant sterol derivatives in higher plants. Can act on several sterols like sitosterol, campesterol and stigmasterol. Both UGT80A2 and UGT80B1 are required for the normal production of SGs and ASGs in seeds. This is Sterol 3-beta-glucosyltransferase UGT80A2 (UGT80A2) from Arabidopsis thaliana (Mouse-ear cress).